The sequence spans 87 residues: Beta-toxin CsE3 (87 aa).

The first 19 residues, 1-19 (MNSLLIIAACLALIGTVWA), serve as a signal peptide directing secretion. In terms of domain architecture, LCN-type CS-alpha/beta spans 20-85 (KEGYIVNYHT…VWPLPKKKCN (66 aa)). Intrachain disulfides connect Cys-31–Cys-84, Cys-35–Cys-60, Cys-44–Cys-65, and Cys-48–Cys-67. Position 85 is an asparagine amide (Asn-85).

Belongs to the long (4 C-C) scorpion toxin superfamily. Sodium channel inhibitor family. Beta subfamily. In terms of tissue distribution, expressed by the venom gland.

It localises to the secreted. Its function is as follows. Beta toxins bind voltage-independently at site-4 of sodium channels (Nav) and shift the voltage of activation toward more negative potentials thereby affecting sodium channel activation and promoting spontaneous and repetitive firing. This is Beta-toxin CsE3 from Centruroides sculpturatus (Arizona bark scorpion).